Here is a 243-residue protein sequence, read N- to C-terminus: MIIDIITIFPNFFDQFLTTSKIKHAIEDKRVEINIHDLRLYTDLKGGKIDDTPYGGGAGMLMIYPPFHKLINKLKTKDTYTVLLSPQGNVFNQQVATKWRDEIKHLILICGHYEGIDDRIQNLIDEEISIGDYVLTGGEIPAMVITDSITRLIPGVINEASYMEDTHQQGLLKYPQYTKPDEYLGMSVPDILKSGHHEKIRLWRLEKSLEKTYLKRPDLLVNRDLTKEESKILSKIKKNLESQ.

Residues Gly-111 and 130-135 each bind S-adenosyl-L-methionine; that span reads IGDYVL.

The protein belongs to the RNA methyltransferase TrmD family. In terms of assembly, homodimer.

The protein resides in the cytoplasm. The enzyme catalyses guanosine(37) in tRNA + S-adenosyl-L-methionine = N(1)-methylguanosine(37) in tRNA + S-adenosyl-L-homocysteine + H(+). In terms of biological role, specifically methylates guanosine-37 in various tRNAs. The polypeptide is tRNA (guanine-N(1)-)-methyltransferase (Acholeplasma laidlawii (strain PG-8A)).